A 167-amino-acid polypeptide reads, in one-letter code: MPFMKGREPIRRTLKYLNAGKLVLKDKVRIFSVNYNTYGAHHAGARDFVFWNIPQIQFKNPEVQVLTLKNMTPSPFVRCYFDDGRDMLIDLDSRNRNDIIDHLVKVVGKTREQLDAEERLKESKDNPANFGYGCGRHCICEIPGQVPCPGTVPLPDHMRGKILFAPK.

The protein belongs to the mitochondrion-specific ribosomal protein mS25 family. As to quaternary structure, component of the mitochondrial ribosome small subunit (28S) which comprises a 12S rRNA and about 30 distinct proteins.

Its subcellular location is the mitochondrion. The sequence is that of Small ribosomal subunit protein mS25 (mRpS25) from Drosophila melanogaster (Fruit fly).